We begin with the raw amino-acid sequence, 353 residues long: Phenol 2-monooxygenase, reductase component DmpP (353 aa).

The region spanning 3–93 (YNVTIEPTGE…DLVIEADVDA (91 aa)) is the 2Fe-2S ferredoxin-type domain. Residues C37, C42, C45, and C77 each coordinate [2Fe-2S] cluster. Positions 102–201 (VEDYRGVVSA…SGPYGQFFVR (100 aa)) constitute an FAD-binding FR-type domain.

The multicomponent enzyme phenol hydroxylase is formed by DmpL (P1 component), DmpM (P2 component), DmpN (P3 component), DmpO (P4 component) and DmpP (P5 component). The cofactor is FAD. It depends on [2Fe-2S] cluster as a cofactor.

It carries out the reaction phenol + NADH + O2 + H(+) = catechol + NAD(+) + H2O. The protein operates within aromatic compound metabolism; phenol degradation. Functionally, part of a multicomponent enzyme which catalyzes the degradation of phenol and some of its methylated derivatives. DmpP probably transfers electrons from NADH, via FAD and the iron-sulfur center, to the oxygenase component of the complex. Required for growth on phenol and for in vitro phenol hydroxylase activity. The sequence is that of Phenol 2-monooxygenase, reductase component DmpP from Pseudomonas sp. (strain CF600).